A 608-amino-acid chain; its full sequence is Chaperone protein DnaK (608 aa).

A Phosphothreonine; by autocatalysis modification is found at Thr-174. Over residues 493-505 the composition is skewed to basic and acidic residues; the sequence is YEEEDRKRKESAE. 2 disordered regions span residues 493–514 and 577–608; these read YEEE…DSMV and GQAA…DDDK. Positions 577 to 590 are enriched in low complexity; sequence GQAAGANPGAQTTG. The segment covering 599–608 has biased composition (basic and acidic residues); that stretch reads AEYKVVDDDK.

The protein belongs to the heat shock protein 70 family.

Functionally, acts as a chaperone. The sequence is that of Chaperone protein DnaK from Acetivibrio thermocellus (strain ATCC 27405 / DSM 1237 / JCM 9322 / NBRC 103400 / NCIMB 10682 / NRRL B-4536 / VPI 7372) (Clostridium thermocellum).